The chain runs to 130 residues: Small ribosomal subunit protein uS8 (130 aa).

The protein belongs to the universal ribosomal protein uS8 family. As to quaternary structure, part of the 30S ribosomal subunit. Contacts proteins S5 and S12.

One of the primary rRNA binding proteins, it binds directly to 16S rRNA central domain where it helps coordinate assembly of the platform of the 30S subunit. This Wigglesworthia glossinidia brevipalpis protein is Small ribosomal subunit protein uS8.